The primary structure comprises 569 residues: Potassium-transporting ATPase potassium-binding subunit (569 aa).

10 helical membrane passes run 5–25, 65–85, 135–155, 179–199, 254–274, 286–306, 383–403, 422–442, 489–509, and 528–548; these read GWAE…PLGV, GYAG…YAVL, LVLT…AAAL, LYVL…LGLP, LTNL…FFAF, ALVI…YWTE, GIAV…LMVG, LLTV…AAVL, MGVA…AMAG, and GGLF…LQFF.

The protein belongs to the KdpA family. In terms of assembly, the system is composed of three essential subunits: KdpA, KdpB and KdpC.

It is found in the cell inner membrane. Functionally, part of the high-affinity ATP-driven potassium transport (or Kdp) system, which catalyzes the hydrolysis of ATP coupled with the electrogenic transport of potassium into the cytoplasm. This subunit binds the periplasmic potassium ions and delivers the ions to the membrane domain of KdpB through an intramembrane tunnel. This Caulobacter sp. (strain K31) protein is Potassium-transporting ATPase potassium-binding subunit.